Reading from the N-terminus, the 350-residue chain is Secreted effector protein PipB2 (350 aa).

4 Pentapeptide repeat domains span residues 162-201, 202-241, 247-286, and 287-326; these read ANLT…NLSG, TSLG…SLLG, CNCS…IMEG, and AVLT…TLTD.

As to quaternary structure, interacts with the host kinesin light chain (KLC), a subunit of the kinesin-1 motor complex.

It localises to the secreted. The protein localises to the host membrane. Effector proteins function to alter host cell physiology and promote bacterial survival in host tissues. Involved in the reorganization of late endosome/lysosome (LE/Lys) compartments in mammalian cells. Necessary and sufficient to link kinesin-1 onto the Salmonella-containing vacuole (SCV) membrane. Required for centrifugal extension of lysosomal glycoprotein-rich membrane tubules, known as Salmonella-induced filaments (Sifs), away from the SCV and toward the cell periphery. Required for virulence, but not for intracellular survival and replication in phagocytic cells. This chain is Secreted effector protein PipB2 (pipB2), found in Salmonella typhimurium (strain LT2 / SGSC1412 / ATCC 700720).